Reading from the N-terminus, the 210-residue chain is Peptidyl-tRNA hydrolase (210 aa).

TRNA is bound at residue Tyr-14. The active-site Proton acceptor is the His-19. 3 residues coordinate tRNA: Phe-64, Asn-66, and Asn-112.

This sequence belongs to the PTH family. Monomer.

The protein resides in the cytoplasm. The catalysed reaction is an N-acyl-L-alpha-aminoacyl-tRNA + H2O = an N-acyl-L-amino acid + a tRNA + H(+). Hydrolyzes ribosome-free peptidyl-tRNAs (with 1 or more amino acids incorporated), which drop off the ribosome during protein synthesis, or as a result of ribosome stalling. In terms of biological role, catalyzes the release of premature peptidyl moieties from peptidyl-tRNA molecules trapped in stalled 50S ribosomal subunits, and thus maintains levels of free tRNAs and 50S ribosomes. The chain is Peptidyl-tRNA hydrolase from Methylorubrum populi (strain ATCC BAA-705 / NCIMB 13946 / BJ001) (Methylobacterium populi).